We begin with the raw amino-acid sequence, 1671 residues long: DENN domain-containing protein Crag (1671 aa).

One can recognise an MABP domain in the interval 39–195 (IEPITDIGVY…DVYLCYKKSM (157 aa)). One can recognise a uDENN domain in the interval 187–364 (VYLCYKKSMY…DEVPFPAPSI (178 aa)). The region spanning 385–521 (PLPRSGAGFH…AARLLRQTLT (137 aa)) is the cDENN domain. One can recognise a dDENN domain in the interval 523–632 (LENAKPISYD…ERSFVSDGDH (110 aa)). Disordered stretches follow at residues 997–1160 (QQQQ…PVAS), 1245–1311 (ANST…RLSE), and 1415–1435 (VEES…ANGN). Acidic residues-rich tracts occupy residues 1011–1023 (GDDD…EDEY) and 1050–1061 (YEADEEDEDEVD). The span at 1072 to 1089 (RVQSPTKISPRTPVTQND) shows a compositional bias: polar residues. The span at 1100 to 1119 (AASATPTQETQQEQQHSQSQ) shows a compositional bias: low complexity. Over residues 1136 to 1147 (RSATFDESTQIG) the composition is skewed to polar residues. Over residues 1254–1277 (NGHHPHGLHHGHHHPHHHHHHHSQ) the composition is skewed to basic residues. Basic and acidic residues predominate over residues 1281 to 1301 (AEQEEHDAAVHEEGKLRRVSS).

Interacts with Cam. Interacts with Rab10. Interacts (via the DENN domains) with Rab11. Expressed in the adult head and body.

The protein localises to the cytoplasm. It localises to the cell cortex. It is found in the early endosome. The protein resides in the recycling endosome. Its subcellular location is the cytoplasmic granule. Calmodulin-binding protein that acts as a guanine exchange factor for Rab10 and Rab11. Essential for maintenance of adult photoreceptor cells. Upon light stimulation, required for trafficking of newly synthesized ninaE (Rh1) from the trans-Golgi network to rhabdomere membranes via Rab11-dependent vesicular transport. During egg development, essential for establishing and maintaining epithelial cell polarity by regulating the correct polarized deposition of basal membrane (BM) proteins in follicular epithelial (FE) cells. Functions by targeting Rab10 to the basal cytoplasm, where it restricts the secretion of BM proteins such as trol/Pcan and vkg/Coll IV to the basal surface. Appears to be involved in regulating the levels and distribution of the guanine nucleotide exchange factor strat, however the two proteins appear to have independent roles in regulating polarized BM protein secretion in the FE. This Drosophila melanogaster (Fruit fly) protein is DENN domain-containing protein Crag.